Consider the following 465-residue polypeptide: MAP kinase-interacting serine/threonine-protein kinase 1 (465 aa).

Positions 1-11 (MVSSQKLEKPI) are enriched in basic and acidic residues. The interval 1–40 (MVSSQKLEKPIEMGSSEPLPIADGDRRRKKKRRGRATDSL) is disordered. S39 carries the post-translational modification Phosphoserine. The 326-residue stretch at 49-374 (KLTSELLGEG…AAQVLQHPWV (326 aa)) folds into the Protein kinase domain. Residues 55 to 63 (LGEGAYAKV) and K78 each bind ATP. Residues 185 to 203 (APTSLGSSDPPTSASQVAG) are compositionally biased toward polar residues. The tract at residues 185-204 (APTSLGSSDPPTSASQVAGT) is disordered. The active-site Proton acceptor is D211. S221 and S226 each carry phosphoserine. Phosphothreonine is present on residues T250, T255, and T385. The interval 446–465 (RRRALAQAGRGEDRSPPTAL) is disordered. The segment covering 455-465 (RGEDRSPPTAL) has biased composition (basic and acidic residues). S460 is subject to Phosphoserine.

The protein belongs to the protein kinase superfamily. CAMK Ser/Thr protein kinase family. In terms of assembly, interacts with the C-terminal regions of EIF4G1 and EIF4G2. Also binds to dephosphorylated ERK1 and ERK2, and to the p38 kinases. Requires Mg(2+) as cofactor. In terms of processing, dual phosphorylation of Thr-250 and Thr-255 activates the kinase. Phosphorylation of Thr-385 activates the kinase. MAPK3/ERK1 is one of the kinases which activate MKNK1/MNK1. Phosphorylation by PAK2 leads to a reduced phosphorylation of EIF4G1. As to expression, ubiquitous.

The protein resides in the cytoplasm. The protein localises to the nucleus. The catalysed reaction is L-seryl-[protein] + ATP = O-phospho-L-seryl-[protein] + ADP + H(+). It catalyses the reaction L-threonyl-[protein] + ATP = O-phospho-L-threonyl-[protein] + ADP + H(+). Phosphorylated and activated by the p38 kinases and kinases in the Erk pathway. May play a role in the response to environmental stress and cytokines. Appears to regulate translation by phosphorylating EIF4E, thus increasing the affinity of this protein for the 7-methylguanosine-containing mRNA cap. The sequence is that of MAP kinase-interacting serine/threonine-protein kinase 1 (MKNK1) from Homo sapiens (Human).